The following is a 206-amino-acid chain: Charged multivesicular body protein 2a homolog 1 (206 aa).

Residues 1 to 32 (MSFFGGNKKTPEQELKDSKRELSKGQREMDRE) form a disordered region. A compositionally biased stretch (basic and acidic residues) spans 9 to 32 (KTPEQELKDSKRELSKGQREMDRE). Coiled coils occupy residues 12–80 (EQEL…RATK) and 114–148 (NKQT…DMFE).

It belongs to the SNF7 family. As to quaternary structure, probable core component of the endosomal sorting required for transport complex III (ESCRT-III). ESCRT-III components are thought to multimerize to form a flat lattice on the perimeter membrane of the endosome.

The protein localises to the endosome membrane. Its function is as follows. Probable core component of the endosomal sorting required for transport complex III (ESCRT-III) which is involved in multivesicular bodies (MVBs) formation and sorting of endosomal cargo proteins into MVBs. MVBs contain intraluminal vesicles (ILVs) that are generated by invagination and scission from the limiting membrane of the endosome and are delivered to lysosomes enabling degradation of membrane proteins. The protein is Charged multivesicular body protein 2a homolog 1 (chmp2a1) of Dictyostelium discoideum (Social amoeba).